The primary structure comprises 1101 residues: Cytospin-A (1101 aa).

Disordered stretches follow at residues 1–170 and 280–366; these read MRKA…NQIS and SDCG…SGNA. 2 stretches are compositionally biased toward polar residues: residues 29-48 and 64-86; these read ESSA…LSKA and ASNS…TAMS. Residues 93 to 110 show a composition bias toward low complexity; the sequence is RSSAGSSSNTKRSGSSGA. Composition is skewed to basic and acidic residues over residues 114–125 and 151–165; these read GSSRERLRERSR and GRTD…KSKS. Residues 162–254 adopt a coiled-coil conformation; the sequence is KSKSDNQISD…LKDRLNALGF (93 aa). A compositionally biased stretch (low complexity) spans 333–355; sequence LTSSDDALDAPSSSSESEGLPST. Coiled-coil stretches lie at residues 373–427 and 492–785; these read CLTE…MDSL and QHLS…RGRV. Residues 923–978 form a disordered region; the sequence is SISVSRRSSEELKRDISVPDGSSAPSLMVMTSPSPQLSLSSSSPTASVTPTARSRI. Positions 929 to 939 are enriched in basic and acidic residues; sequence RSSEELKRDIS. Positions 953–975 are enriched in low complexity; sequence TSPSPQLSLSSSSPTASVTPTAR. Residues 995-1100 enclose the Calponin-homology (CH) domain; it reads GSKRNALLKW…YVTSIYKYFE (106 aa).

The protein belongs to the cytospin-A family. As to quaternary structure, may interact with both microtubules and actin cytoskeleton.

Its subcellular location is the cytoplasm. The protein localises to the cytoskeleton. The protein resides in the spindle. It localises to the cell junction. It is found in the gap junction. In terms of biological role, involved in cytokinesis and spindle organization. May play a role in actin cytoskeleton organization and microtubule stabilization and hence required for proper cell adhesion and migration. In Xenopus tropicalis (Western clawed frog), this protein is Cytospin-A (specc1l).